The chain runs to 897 residues: uncharacterized protein (897 aa).

Disordered regions lie at residues 25–89 (RLQD…TRKR) and 106–168 (PTRL…TPPS). Composition is skewed to low complexity over residues 32-44 (SSSP…SSSS), 57-68 (SLQNSQSSSYSL), and 106-142 (PTRL…SSVS). In terms of domain architecture, Helicase ATP-binding spans 263 to 446 (SMEQSSKCGG…YSLLKFLRIK (184 aa)). 276–283 (DDMGLGKT) contacts ATP. The short motif at 397-400 (DEAH) is the DEAH box element. The RING-type zinc finger occupies 606–655 (CSVCLDPCLAPVFIIPCGHFTCQECMSMLVGQKYGSSSTSTIIAKCPMCR). Residues 727-890 (QARQTILDII…LSRLDKEELL (164 aa)) enclose the Helicase C-terminal domain.

Belongs to the SNF2/RAD54 helicase family.

The protein localises to the cytoplasm. It localises to the nucleus. This is an uncharacterized protein from Schizosaccharomyces pombe (strain 972 / ATCC 24843) (Fission yeast).